A 168-amino-acid polypeptide reads, in one-letter code: Zinc finger A20 and AN1 domain-containing stress-associated protein 1 (168 aa).

Residues 13-47 form an A20-type zinc finger; the sequence is PSEPKLCVKGCGFFGSPSNMNLCSKCYRDIRATEE. Residues C19, C23, C35, and C38 each contribute to the Zn(2+) site. The tract at residues 49–105 is disordered; that stretch reads TASAKAAVEKSLNPNKPKTQPQQSQEITQGVLGSGSSSSSTRGGDSAAAPLDPPKST. The segment covering 60–76 has biased composition (polar residues); that stretch reads LNPNKPKTQPQQSQEIT. A compositionally biased stretch (low complexity) spans 82-94; sequence SGSSSSSTRGGDS. The segment at 103–149 adopts an AN1-type zinc-finger fold; it reads KSTATRCLSCNKKVGVTGFKCRCGSTFCGTHRYPESHECQFDFKGVA. The Zn(2+) site is built by C109, C112, C123, C125, C130, H133, H139, and C141.

In terms of biological role, may be involved in environmental stress response. The polypeptide is Zinc finger A20 and AN1 domain-containing stress-associated protein 1 (SAP1) (Arabidopsis thaliana (Mouse-ear cress)).